Consider the following 1700-residue polypeptide: Leucine-rich repeat-containing protein 37A2 (1700 aa).

An N-terminal signal peptide occupies residues 1 to 35; it reads MSSAQCPALVCVMSRLRFWGPWPLLMWQLLWLLVK. Residues 36 to 1582 are Extracellular-facing; it reads EAQPLEWVKD…VPGYGYTDKL (1547 aa). The span at 54-65 shows a compositional bias: polar residues; the sequence is LGPPDSWSSHSS. Disordered regions lie at residues 54–104, 130–156, 169–534, 559–580, 619–642, and 729–752; these read LGPP…ESTE, QQDL…DPAQ, QLST…AQPP, TEVE…KVVP, PEPT…KHPE, and TKPT…PDLG. The LRR 1 repeat unit spans residues 137 to 160; that stretch reads LSPQERLPVSPKKLKKDPAQRWSL. Polar residues-rich tracts occupy residues 169-189 and 223-237; these read QLST…STDT and ETQN…QSSS. LRR repeat units lie at residues 230–253 and 267–290; these read LEDI…LEEE and ESSM…EDQA. Residues 238-249 show a composition bias toward low complexity; sequence LQQEAPAQLPQL. N296 carries an N-linked (GlcNAc...) asparagine glycan. The segment covering 307 to 326 has biased composition (polar residues); the sequence is TITSEPTNETESSQAQQETP. The segment covering 358–368 has biased composition (low complexity); the sequence is SEQQQPVQPSE. Over residues 433 to 446 the composition is skewed to polar residues; that stretch reads LVHQEATTRLSGSG. The segment covering 482-493 has biased composition (low complexity); sequence SPEPINNENPSP. Residues 729–749 are compositionally biased toward low complexity; sequence TKPTTEVKPSPTTEETSTQPP. LRR repeat units follow at residues 864–887, 888–911, 912–935, 937–959, 963–987, and 1002–1027; these read NGTF…VWKA, YSWT…SFEG, LLSL…TFEP, PFLK…TFQA, MQFL…LFKL, and LTTL…MACC. A glycan (N-linked (GlcNAc...) asparagine) is linked at N1079. One copy of the LRR 10 repeat lies at 1124 to 1146; the sequence is LPYFSAVNLDVKSLLLPFIKLPT. 2 stretches are compositionally biased toward basic and acidic residues: residues 1182–1191 and 1201–1216; these read VGRQSIRREQ and AEEK…EVEQ. Disordered regions lie at residues 1182-1227 and 1309-1328; these read VGRQ…EKLA and KTRS…PKVR. The chain crosses the membrane as a helical span at residues 1583 to 1603; the sequence is ILALIVTGILTILIILFCLIV. Residues 1604 to 1700 are Cytoplasmic-facing; the sequence is ICCHRRSLQE…TEEEESEALP (97 aa). Residues 1675 to 1685 show a composition bias toward basic and acidic residues; sequence NEDKILNRDPG. The segment at 1675 to 1700 is disordered; that stretch reads NEDKILNRDPGDSEAPTEEEESEALP. Positions 1689–1700 are enriched in acidic residues; that stretch reads APTEEEESEALP.

It belongs to the LRRC37A family.

The protein resides in the membrane. This is Leucine-rich repeat-containing protein 37A2 (LRRC37A2) from Homo sapiens (Human).